A 557-amino-acid chain; its full sequence is Nucleoporin AMO1 (557 aa).

Residues 1-25 form a C3H1-type zinc finger; that stretch reads MTVCRFWQQGYCRNGNACKFEHPPK. A coiled-coil region spans residues 114–141; the sequence is QGALNEIQAAYQAAQQQIQNTLQNIPAA. The tract at residues 161–297 is disordered; it reads ESSKGSSTGG…SALGPKPGAF (137 aa). SXFG repeat units follow at residues 171–174, 200–203, 213–216, 228–231, 240–243, 249–252, 262–265, 282–285, 303–306, and 314–317; these read SVFG, SAFG, STFG, and SPFG. Over residues 195 to 215 the composition is skewed to polar residues; that stretch reads STPSTSAFGQPSPLGQKSSAF. Positions 243 to 253 are enriched in polar residues; it reads GSPQTGSTFGQ. The segment at 315 to 463 is disordered; that stretch reads PFGAAAQATQ…DLLSYATKNP (149 aa). Polar residues-rich tracts occupy residues 321–338 and 351–366; these read QATQ…QAAN and GQPS…GQPS. SXFG repeat units follow at residues 348-351, 370-373, 387-390, and 407-410; these read SAFG and SLFG. The segment covering 367–385 has biased composition (low complexity); that stretch reads TQSSAFGQQQPQQAGTFGS. Polar residues predominate over residues 388–429; it reads LFGQQQQQPSNVFGQPSTTSAFGSQAATSGFSQLGNATSTIG. The span at 430–443 shows a compositional bias: low complexity; sequence ASPAGAQAPASKSP.

In terms of assembly, the nuclear pore complex (NPC) constitutes the exclusive means of nucleocytoplasmic transport. NPCs allow the passive diffusion of ions and small molecules and the active, nuclear transport receptor-mediated bidirectional transport of macromolecules such as proteins, RNAs, ribonucleoparticles (RNPs), and ribosomal subunits across the nuclear envelope. The 55-60 MDa NPC is composed of at least 28 different subunits: AMO1, ELYS, GLE1, GLE2, MLP1, NDC1, NIC96, NSP1, NUP133, NUP145, NUP152, NUP159, NUP170, NUP188, NUP192, NUP37, NUP49, NUP53, NUP56, NUP57, NUP82, NUP84, NUP85, POM152, POM33, POM34, SEC13 and SEH1. Due to its 8-fold rotational symmetry, all subunits are present with 8 copies or multiples thereof.

It is found in the nucleus. Its subcellular location is the nuclear pore complex. The protein resides in the nucleus membrane. Its function is as follows. Functions as a component of the nuclear pore complex (NPC). NPC components, collectively referred to as nucleoporins (NUPs), can play the role of both NPC structural components and of docking or interaction partners for transiently associated nuclear transport factors. Active directional transport is assured by both, a Phe-Gly (FG) repeat affinity gradient for these transport factors across the NPC and a transport cofactor concentration gradient across the nuclear envelope (GSP1 and GSP2 GTPases associated predominantly with GTP in the nucleus, with GDP in the cytoplasm). AMO1 is specifically important for nuclear protein and mRNA export. This chain is Nucleoporin AMO1 (AMO1), found in Chaetomium thermophilum (strain DSM 1495 / CBS 144.50 / IMI 039719) (Thermochaetoides thermophila).